A 116-amino-acid polypeptide reads, in one-letter code: MKGPSKTTKNNTKIKLKKGDLVQVISGSDKTKTGEIIAIIYKTNKVIVKGINLKVKHKKPQQEGETGEIIKFEAPIHTSNVMLFSEQNNIASRSSVIINDKGQKIRKLKKTGELIK.

This sequence belongs to the universal ribosomal protein uL24 family. In terms of assembly, part of the 50S ribosomal subunit.

It localises to the plastid. The protein resides in the chloroplast. Functionally, one of two assembly initiator proteins, it binds directly to the 5'-end of the 23S rRNA, where it nucleates assembly of the 50S subunit. This is Large ribosomal subunit protein uL24c (rpl24) from Pyropia yezoensis (Susabi-nori).